Consider the following 363-residue polypeptide: Large ribosomal subunit protein uL4 (363 aa).

The protein belongs to the universal ribosomal protein uL4 family. Component of the large ribosomal subunit. Mature ribosomes consist of a small (40S) and a large (60S) subunit. The 40S subunit contains about 32 different proteins and 1 molecule of RNA (18S). The 60S subunit contains 45 different proteins and 3 molecules of RNA (25S, 5.8S and 5S).

The protein localises to the cytoplasm. Its function is as follows. Component of the ribosome, a large ribonucleoprotein complex responsible for the synthesis of proteins in the cell. The small ribosomal subunit (SSU) binds messenger RNAs (mRNAs) and translates the encoded message by selecting cognate aminoacyl-transfer RNA (tRNA) molecules. The large subunit (LSU) contains the ribosomal catalytic site termed the peptidyl transferase center (PTC), which catalyzes the formation of peptide bonds, thereby polymerizing the amino acids delivered by tRNAs into a polypeptide chain. The nascent polypeptides leave the ribosome through a tunnel in the LSU and interact with protein factors that function in enzymatic processing, targeting, and the membrane insertion of nascent chains at the exit of the ribosomal tunnel. The polypeptide is Large ribosomal subunit protein uL4 (Candida albicans (strain SC5314 / ATCC MYA-2876) (Yeast)).